The chain runs to 318 residues: NADH-ubiquinone oxidoreductase chain 1 (318 aa).

8 helical membrane passes run 2-22, 70-90, 100-120, 136-156, 172-192, 222-242, 253-273, and 294-314; these read FMIN…FLTL, MFII…SPLP, LGVL…LWSG, VAQT…VLLM, LWLL…TLAE, LFFL…AILF, ELYT…FLWI, and LPLT…TASI.

Belongs to the complex I subunit 1 family. In terms of assembly, core subunit of respiratory chain NADH dehydrogenase (Complex I) which is composed of 45 different subunits.

Its subcellular location is the mitochondrion inner membrane. It catalyses the reaction a ubiquinone + NADH + 5 H(+)(in) = a ubiquinol + NAD(+) + 4 H(+)(out). Its function is as follows. Core subunit of the mitochondrial membrane respiratory chain NADH dehydrogenase (Complex I) which catalyzes electron transfer from NADH through the respiratory chain, using ubiquinone as an electron acceptor. Essential for the catalytic activity and assembly of complex I. This is NADH-ubiquinone oxidoreductase chain 1 (MT-ND1) from Balaenoptera musculus (Blue whale).